Here is a 195-residue protein sequence, read N- to C-terminus: uncharacterized protein (195 aa).

The segment at 143-195 (NKLIETINTNRTNNTDNKSTKSKKQTETKKSLRTNKIVKQPINKSKKNIREEY) is disordered. Residues 148–159 (TINTNRTNNTDN) are compositionally biased toward low complexity.

This is an uncharacterized protein from Acanthamoeba polyphaga (Amoeba).